Consider the following 391-residue polypeptide: 1-deoxy-D-xylulose 5-phosphate reductoisomerase (391 aa).

Residues Thr10, Gly11, Ser12, Ile13, Asn38, and Asn122 each contribute to the NADPH site. Lys123 contributes to the 1-deoxy-D-xylulose 5-phosphate binding site. Glu124 is a binding site for NADPH. Residue Asp148 coordinates Mn(2+). 1-deoxy-D-xylulose 5-phosphate contacts are provided by Ser149, Glu150, Ser173, and His196. Glu150 serves as a coordination point for Mn(2+). Gly202 is a binding site for NADPH. 1-deoxy-D-xylulose 5-phosphate contacts are provided by Ser209, Asn214, Lys215, and Glu218. Glu218 lines the Mn(2+) pocket.

The protein belongs to the DXR family. Mg(2+) is required as a cofactor. Mn(2+) serves as cofactor.

The catalysed reaction is 2-C-methyl-D-erythritol 4-phosphate + NADP(+) = 1-deoxy-D-xylulose 5-phosphate + NADPH + H(+). The protein operates within isoprenoid biosynthesis; isopentenyl diphosphate biosynthesis via DXP pathway; isopentenyl diphosphate from 1-deoxy-D-xylulose 5-phosphate: step 1/6. Catalyzes the NADPH-dependent rearrangement and reduction of 1-deoxy-D-xylulose-5-phosphate (DXP) to 2-C-methyl-D-erythritol 4-phosphate (MEP). This Wolbachia pipientis subsp. Culex pipiens (strain wPip) protein is 1-deoxy-D-xylulose 5-phosphate reductoisomerase.